The chain runs to 535 residues: MHDKILILDFGSQVTQLIARRVRDARVYSEIHPYDCDPEFIRKFIQEQGGKGIILSGGPNSVTEDGSPRAPQIVFELGVPVLGICYGMQTMATQLGGAVASAESLGKAREFGYSEVRAHGHTNLLKGIQDFSTSEGHGILKVWMSHGDSVTALPPAFKLMASTESCPIAGMADEDRRFYAFQFHPEVTHTIQGTAIIERFVHEICHCKPDWVMGDYIAEAVEHIRKQVGDEEVILGLSGGVDSSVAAALIHRAIGDQLTCVFVDHGLLRLNEGDMVMEMFARNLGVKVIRVDAASTFMGKLTGVADPEAKRKIIGKEFVEIFQSESGKIENAKWLAQGTIYPDVIESAGKGKKGAHTIKSHHNVGGLPEDMHLKLLEPLRELFKDEVRELGVALGLPREMVYRHPFPGPGLGVRILGEVKAEFASLLQRADAIFIEELRNTIDEVSQKSWYDLTSQAFAVFLPVKSVGVMGDGRTYEYVVALRAVQTQDFMTAHWAHLPHELLGKVSNRIINEVRGINRVVYDISGKPPATIEWE.

The region spanning 4 to 210 is the Glutamine amidotransferase type-1 domain; it reads KILILDFGSQ…VHEICHCKPD (207 aa). Residue cysteine 85 is the Nucleophile of the active site. Catalysis depends on residues histidine 184 and glutamate 186. One can recognise a GMPS ATP-PPase domain in the interval 211-403; the sequence is WVMGDYIAEA…LGLPREMVYR (193 aa). 238–244 serves as a coordination point for ATP; sequence SGGVDSS.

In terms of assembly, homodimer.

The catalysed reaction is XMP + L-glutamine + ATP + H2O = GMP + L-glutamate + AMP + diphosphate + 2 H(+). It participates in purine metabolism; GMP biosynthesis; GMP from XMP (L-Gln route): step 1/1. Functionally, catalyzes the synthesis of GMP from XMP. The polypeptide is GMP synthase [glutamine-hydrolyzing] (Polynucleobacter asymbioticus (strain DSM 18221 / CIP 109841 / QLW-P1DMWA-1) (Polynucleobacter necessarius subsp. asymbioticus)).